Reading from the N-terminus, the 137-residue chain is Small ribosomal subunit protein uS12 (137 aa).

2 disordered regions span residues 1-21 (MPTI…KSDS) and 34-57 (VHTK…TPKK). Aspartate 102 carries the 3-methylthioaspartic acid modification.

This sequence belongs to the universal ribosomal protein uS12 family. As to quaternary structure, part of the 30S ribosomal subunit. Contacts proteins S8 and S17. May interact with IF1 in the 30S initiation complex.

Its function is as follows. With S4 and S5 plays an important role in translational accuracy. Interacts with and stabilizes bases of the 16S rRNA that are involved in tRNA selection in the A site and with the mRNA backbone. Located at the interface of the 30S and 50S subunits, it traverses the body of the 30S subunit contacting proteins on the other side and probably holding the rRNA structure together. The combined cluster of proteins S8, S12 and S17 appears to hold together the shoulder and platform of the 30S subunit. This chain is Small ribosomal subunit protein uS12, found in Streptococcus uberis (strain ATCC BAA-854 / 0140J).